Here is a 265-residue protein sequence, read N- to C-terminus: Apolipoprotein A-I (265 aa).

The signal sequence occupies residues 1–18 (MKAVVLTLAVLFLTGSQA). Repeat copies occupy residues 67 to 88 (LKLV…EHLG) and 89 to 110 (PVAQ…REIN). The segment at 67–265 (LKLVDNWDTL…IDEAAKKLTA (199 aa)) is 10 X approximate tandem repeats. A 3; half-length repeat occupies 111–121 (KDLEDVRQKTQ). 5 repeat units span residues 122–143 (PFLD…QKVE), 144–165 (PLSA…EQVT), 166–187 (PLGE…TQLA), 188–209 (PYSE…EGGS), and 210–231 (ASLA…EKAK). Residue M193 is modified to Methionine sulfoxide. One copy of the 9; half-length repeat lies at 232-242 (PVLEDIHQGLM). Methionine sulfoxide is present on residues M242 and M244. Residues 243–265 (PMWESFKTGVLNVIDEAAKKLTA) form repeat 10.

The protein belongs to the apolipoprotein A1/A4/E family. Homodimer. Interacts with APOA1BP and CLU. Component of a sperm activating protein complex (SPAP), consisting of APOA1, an immunoglobulin heavy chain, an immunoglobulin light chain and albumin. Interacts with NDRG1. Interacts with SCGB3A2. Interacts with NAXE and YJEFN3. Post-translationally, glycosylated. Palmitoylated. In terms of processing, phosphorylation sites are present in the extracellular medium. Major protein of plasma HDL, also found in chylomicrons.

Its subcellular location is the secreted. Participates in the reverse transport of cholesterol from tissues to the liver for excretion by promoting cholesterol efflux from tissues and by acting as a cofactor for the lecithin cholesterol acyltransferase (LCAT). As part of the SPAP complex, activates spermatozoa motility. The protein is Apolipoprotein A-I (APOA1) of Tupaia belangeri (Common tree shrew).